A 209-amino-acid polypeptide reads, in one-letter code: Putative 3-methyladenine DNA glycosylase (209 aa).

Residues 189 to 209 (HVSTTRLGAPKKKRQKRLERR) form a disordered region. A compositionally biased stretch (basic residues) spans 197–209 (APKKKRQKRLERR).

Belongs to the DNA glycosylase MPG family.

The polypeptide is Putative 3-methyladenine DNA glycosylase (Chlorobaculum parvum (strain DSM 263 / NCIMB 8327) (Chlorobium vibrioforme subsp. thiosulfatophilum)).